A 328-amino-acid polypeptide reads, in one-letter code: Zinc transporter ZIP13 (328 aa).

Residues 1-7 are Lumenal-facing; that stretch reads MPGCPCP. A helical transmembrane segment spans residues 8 to 28; sequence GCGMAGPRLLFLTALALELLG. Topologically, residues 29 to 68 are cytoplasmic; sequence RAGGSQPALRSRGTATACRLDNKESESWGALLSGERLDTW. A helical membrane pass occupies residues 69–89; the sequence is ICSLLGSLMVGLSGVFPLLVI. Over 90–108 the chain is Lumenal; that stretch reads PLEMGTMLRSEAGAWHLKQ. Residues 109-129 form a helical membrane-spanning segment; the sequence is LLSFALGGLLGNVFLHLLPEA. The Cytoplasmic segment spans residues 130 to 149; sequence WAYTCSASPGGEGQSLQQQQ. Residues 150–170 form a helical membrane-spanning segment; that stretch reads QLGLWVIAGILTFLALEKMFL. Topologically, residues 171 to 199 are lumenal; sequence DSKEEGTSQVSGYLNLLANTIDNFTHGLA. The helical transmembrane segment at 200-220 threads the bilayer; that stretch reads VAASFLVSKKIGLLTTMAILL. The short motif at 221–226 is the XEXPHE-motif element; sequence HEIPHE. Over 221-242 the chain is Cytoplasmic; it reads HEIPHEVGDFAILLRAGFDRWS. Residues 243 to 263 traverse the membrane as a helical segment; sequence AAKLQLSTALGGLLGAGFAIC. Over 264 to 273 the chain is Lumenal; sequence TQSPKGVEET. A helical transmembrane segment spans residues 274–294; that stretch reads AAWVLPFTSGGFLYIALVNVL. The Cytoplasmic portion of the chain corresponds to 295-306; it reads PDLLEEEDPWRS. The chain crosses the membrane as a helical span at residues 307–327; the sequence is LQQLLLLCAGIVVMVLFSLFV. Asp-328 is a topological domain (lumenal).

This sequence belongs to the ZIP transporter (TC 2.A.5) family. Homodimer.

Its subcellular location is the golgi apparatus membrane. The protein localises to the cytoplasmic vesicle membrane. It is found in the endoplasmic reticulum membrane. It carries out the reaction Zn(2+)(in) = Zn(2+)(out). Functions as a zinc transporter transporting Zn(2+) from the Golgi apparatus to the cytosol and thus influences the zinc level at least in areas of the cytosol. May regulate beige adipocyte differentiation. This is Zinc transporter ZIP13 from Pongo abelii (Sumatran orangutan).